The primary structure comprises 104 residues: L-rhamnose mutarotase (104 aa).

Tyrosine 18 provides a ligand contact to substrate. Catalysis depends on histidine 22, which acts as the Proton donor. Substrate is bound by residues tyrosine 41 and tryptophan 76 to tryptophan 77.

Belongs to the rhamnose mutarotase family. Homodimer.

It localises to the cytoplasm. The catalysed reaction is alpha-L-rhamnose = beta-L-rhamnose. The protein operates within carbohydrate metabolism; L-rhamnose metabolism. Involved in the anomeric conversion of L-rhamnose. In Shigella dysenteriae serotype 1 (strain Sd197), this protein is L-rhamnose mutarotase.